A 346-amino-acid polypeptide reads, in one-letter code: Threonylcarbamoyl-AMP synthase (346 aa).

One can recognise a YrdC-like domain in the interval 18–205 (DPQIAQAAAL…IPVLLRPGGI (188 aa)). An L-threonine-binding site is contributed by Thr-40. Arg-63 and Asn-67 together coordinate ATP. Residue His-72 participates in L-threonine binding. Position 123 (Thr-123) interacts with ATP. L-threonine-binding residues include Arg-127 and Ala-147. ATP contacts are provided by Ser-149 and Ser-157. Residue Ser-187 coordinates L-threonine. ATP is bound by residues Arg-201 and Tyr-240.

The protein belongs to the SUA5 family.

It is found in the cytoplasm. The catalysed reaction is L-threonine + hydrogencarbonate + ATP = L-threonylcarbamoyladenylate + diphosphate + H2O. Functionally, required for the formation of a threonylcarbamoyl group on adenosine at position 37 (t(6)A37) in tRNAs that read codons beginning with adenine. Catalyzes the conversion of L-threonine, HCO(3)(-)/CO(2) and ATP to give threonylcarbamoyl-AMP (TC-AMP) as the acyladenylate intermediate, with the release of diphosphate. Is also able to catalyze the reverse reaction in vitro, i.e. the formation of ATP from TC-AMP and PPi. The sequence is that of Threonylcarbamoyl-AMP synthase (ywlC) from Bacillus subtilis (strain 168).